Reading from the N-terminus, the 535-residue chain is MSSLARGISRRRTEVATQVEAAPTGLRPNAVVGVRLAALADQVGAALAEGPAQRAVTEDRTVTGVTLRAQDVSPGDLFAALTGSTTHGARHVGDAIARGAVAVLTDPAGVAEIAGRAAVPVLVHPAPRGVLGGLAATVYGHPSERLTVIGITGTSGKTTTTYLVEAGLRAAGRVAGLIGTIGIRVGGADLPSALTTPEAPTLQAMLAAMVERGVDTVVMEVSSHALALGRVDGTRFAVGAFTNLSRDHLDFHPSMADYFEAKASLFDPDSALRARTAVVCIDDDAGRAMAARAADAITVSAADRPAHWRATDVAPTDAGGQQFTAIDPAGVGHHIGIRLPGRYNVANCLVALAILDTVGVSPEQAVPGLREIRVPGRLEQIDRGQGFLALVDYAHKPEALRSVLTTLAHPDRRLAVVFGAGGDRDPGKRAPMGRIAAQLADLVVVTDDNPRDEDPTAIRREILAGAAEVGGDAQVVEIADRRDAIRHAVAWARPGDVVLIAGKGHETGQRGGGRVRPFDDRVELAAALEALERRA.

Leu-67 is a binding site for UDP-N-acetyl-alpha-D-muramoyl-L-alanyl-D-glutamate. 153 to 159 contributes to the ATP binding site; it reads GTSGKTT. UDP-N-acetyl-alpha-D-muramoyl-L-alanyl-D-glutamate contacts are provided by residues 195 to 196, Ser-222, and Arg-230; that span reads TT. Position 262 is an N6-carboxylysine (Lys-262). Meso-2,6-diaminopimelate contacts are provided by residues Arg-424, 448–451, Gly-502, and Glu-506; that span reads DNPR. The Meso-diaminopimelate recognition motif signature appears at 448–451; the sequence is DNPR.

It belongs to the MurCDEF family. MurE subfamily. Requires Mg(2+) as cofactor. Post-translationally, carboxylation is probably crucial for Mg(2+) binding and, consequently, for the gamma-phosphate positioning of ATP.

Its subcellular location is the cytoplasm. It catalyses the reaction UDP-N-acetyl-alpha-D-muramoyl-L-alanyl-D-glutamate + meso-2,6-diaminopimelate + ATP = UDP-N-acetyl-alpha-D-muramoyl-L-alanyl-gamma-D-glutamyl-meso-2,6-diaminopimelate + ADP + phosphate + H(+). The protein operates within cell wall biogenesis; peptidoglycan biosynthesis. Catalyzes the addition of meso-diaminopimelic acid to the nucleotide precursor UDP-N-acetylmuramoyl-L-alanyl-D-glutamate (UMAG) in the biosynthesis of bacterial cell-wall peptidoglycan. This Mycobacterium bovis (strain ATCC BAA-935 / AF2122/97) protein is UDP-N-acetylmuramoyl-L-alanyl-D-glutamate--2,6-diaminopimelate ligase.